A 98-amino-acid polypeptide reads, in one-letter code: UPF0251 protein SO_0727 (98 aa).

The protein belongs to the UPF0251 family.

This chain is UPF0251 protein SO_0727, found in Shewanella oneidensis (strain ATCC 700550 / JCM 31522 / CIP 106686 / LMG 19005 / NCIMB 14063 / MR-1).